The chain runs to 194 residues: MSPITTLLIGIAMSTDAFAAAIGKGAAIGKPRLRDALYVAVIFGVIETATPIAGWLLGQVASHYIATFDHWIAFGLLGGLGIHMIVNGLKNNGNTCKDNADTHNRNSRWLTLAATALATSIDAAAIGISMAFLDIHIGIVAAVIGLCTFTMVIFGVMLGRVLGTFVGNRAEIVGGIILIIVGSTILYEHLSNTG.

6 helical membrane passes run 3–23, 37–57, 65–85, 112–132, 137–157, and 170–190; these read PITTLLIGIAMSTDAFAAAIG, LYVAVIFGVIETATPIAGWLL, IATFDHWIAFGLLGGLGIHMI, LAATALATSIDAAAIGISMAF, IGIVAAVIGLCTFTMVIFGVM, and AEIVGGIILIIVGSTILYEHL.

Belongs to the MntP (TC 9.B.29) family.

It localises to the cell inner membrane. Its function is as follows. Probably functions as a manganese efflux pump. In Xylella fastidiosa (strain M23), this protein is Putative manganese efflux pump MntP.